A 220-amino-acid chain; its full sequence is Metalloproteinase inhibitor 2 (220 aa).

An N-terminal signal peptide occupies residues 1–26; sequence MGATARSLRLALGLLLLGTLPRGADA. Cys-27 lines the Zn(2+) pocket. Involved in metalloproteinase-binding regions lie at residues 27–30 and 95–96; these read CSCS and SA. Disulfide bonds link Cys-27–Cys-98, Cys-29–Cys-127, Cys-39–Cys-152, Cys-154–Cys-201, Cys-159–Cys-164, and Cys-172–Cys-193. The 126-residue stretch at 27-152 folds into the NTR domain; sequence CSCSPVHPQQ…SLNHRYQMGC (126 aa).

The protein belongs to the protease inhibitor I35 (TIMP) family. Interacts (via the C-terminal) with MMP2 (via the C-terminal PEX domain); the interaction inhibits the MMP2 activity. In terms of processing, the activity of TIMP2 is dependent on the presence of disulfide bonds. Predominantly expressed in the lung in alveolar macrophages and epithelial cells. Also found in brain, kidney, intestine, spleen and heart.

It is found in the secreted. Functionally, complexes with metalloproteinases (such as collagenases) and irreversibly inactivates them by binding to their catalytic zinc cofactor. This Cavia porcellus (Guinea pig) protein is Metalloproteinase inhibitor 2 (TIMP2).